Consider the following 577-residue polypeptide: Isocitrate dehydrogenase kinase/phosphatase (577 aa).

ATP contacts are provided by residues 315–321 (APGIRGM) and lysine 336. Aspartate 371 is an active-site residue.

It belongs to the AceK family.

It localises to the cytoplasm. It carries out the reaction L-seryl-[isocitrate dehydrogenase] + ATP = O-phospho-L-seryl-[isocitrate dehydrogenase] + ADP + H(+). Bifunctional enzyme which can phosphorylate or dephosphorylate isocitrate dehydrogenase (IDH) on a specific serine residue. This is a regulatory mechanism which enables bacteria to bypass the Krebs cycle via the glyoxylate shunt in response to the source of carbon. When bacteria are grown on glucose, IDH is fully active and unphosphorylated, but when grown on acetate or ethanol, the activity of IDH declines drastically concomitant with its phosphorylation. In Escherichia fergusonii (strain ATCC 35469 / DSM 13698 / CCUG 18766 / IAM 14443 / JCM 21226 / LMG 7866 / NBRC 102419 / NCTC 12128 / CDC 0568-73), this protein is Isocitrate dehydrogenase kinase/phosphatase.